We begin with the raw amino-acid sequence, 373 residues long: UDP-N-acetylglucosamine--N-acetylmuramyl-(pentapeptide) pyrophosphoryl-undecaprenol N-acetylglucosamine transferase (373 aa).

UDP-N-acetyl-alpha-D-glucosamine is bound by residues 13 to 15 (TGG), asparagine 124, arginine 165, serine 192, and glutamine 293.

It belongs to the glycosyltransferase 28 family. MurG subfamily.

Its subcellular location is the cell inner membrane. The enzyme catalyses di-trans,octa-cis-undecaprenyl diphospho-N-acetyl-alpha-D-muramoyl-L-alanyl-D-glutamyl-meso-2,6-diaminopimeloyl-D-alanyl-D-alanine + UDP-N-acetyl-alpha-D-glucosamine = di-trans,octa-cis-undecaprenyl diphospho-[N-acetyl-alpha-D-glucosaminyl-(1-&gt;4)]-N-acetyl-alpha-D-muramoyl-L-alanyl-D-glutamyl-meso-2,6-diaminopimeloyl-D-alanyl-D-alanine + UDP + H(+). It participates in cell wall biogenesis; peptidoglycan biosynthesis. Its function is as follows. Cell wall formation. Catalyzes the transfer of a GlcNAc subunit on undecaprenyl-pyrophosphoryl-MurNAc-pentapeptide (lipid intermediate I) to form undecaprenyl-pyrophosphoryl-MurNAc-(pentapeptide)GlcNAc (lipid intermediate II). This Sinorhizobium fredii (strain NBRC 101917 / NGR234) protein is UDP-N-acetylglucosamine--N-acetylmuramyl-(pentapeptide) pyrophosphoryl-undecaprenol N-acetylglucosamine transferase.